We begin with the raw amino-acid sequence, 60 residues long: Putative mercuric resistance protein (60 aa).

The sequence is that of Putative mercuric resistance protein from Pseudomonas aeruginosa.